The sequence spans 190 residues: Holliday junction branch migration complex subunit RuvA (190 aa).

The interval 1–65 (MIGTLSGTVE…DGVSQLYGFA (65 aa)) is domain I. The domain II stretch occupies residues 66–137 (NREEQNCMRM…LTPQVQKFEL (72 aa)). The tract at residues 137–141 (LNRFA) is flexible linker. A domain III region spans residues 142–190 (ATTRTDSEAVAALLSLGYERTAALGALQKVGVCDSTEDAVRRALLELSK).

Belongs to the RuvA family. Homotetramer. Forms an RuvA(8)-RuvB(12)-Holliday junction (HJ) complex. HJ DNA is sandwiched between 2 RuvA tetramers; dsDNA enters through RuvA and exits via RuvB. An RuvB hexamer assembles on each DNA strand where it exits the tetramer. Each RuvB hexamer is contacted by two RuvA subunits (via domain III) on 2 adjacent RuvB subunits; this complex drives branch migration. In the full resolvosome a probable DNA-RuvA(4)-RuvB(12)-RuvC(2) complex forms which resolves the HJ.

It is found in the cytoplasm. Its function is as follows. The RuvA-RuvB-RuvC complex processes Holliday junction (HJ) DNA during genetic recombination and DNA repair, while the RuvA-RuvB complex plays an important role in the rescue of blocked DNA replication forks via replication fork reversal (RFR). RuvA specifically binds to HJ cruciform DNA, conferring on it an open structure. The RuvB hexamer acts as an ATP-dependent pump, pulling dsDNA into and through the RuvAB complex. HJ branch migration allows RuvC to scan DNA until it finds its consensus sequence, where it cleaves and resolves the cruciform DNA. The chain is Holliday junction branch migration complex subunit RuvA from Anaplasma marginale (strain Florida).